The sequence spans 196 residues: uncharacterized protein (196 aa).

The protein belongs to the mimivirus R24/R907 family.

This is an uncharacterized protein from Acanthamoeba polyphaga (Amoeba).